The following is a 281-amino-acid chain: 2,3,4,5-tetrahydropyridine-2,6-dicarboxylate N-succinyltransferase (281 aa).

Substrate is bound by residues Arg-108 and Asp-145.

Belongs to the transferase hexapeptide repeat family. Homotrimer.

It is found in the cytoplasm. It carries out the reaction (S)-2,3,4,5-tetrahydrodipicolinate + succinyl-CoA + H2O = (S)-2-succinylamino-6-oxoheptanedioate + CoA. The protein operates within amino-acid biosynthesis; L-lysine biosynthesis via DAP pathway; LL-2,6-diaminopimelate from (S)-tetrahydrodipicolinate (succinylase route): step 1/3. The polypeptide is 2,3,4,5-tetrahydropyridine-2,6-dicarboxylate N-succinyltransferase (Methylobacterium nodulans (strain LMG 21967 / CNCM I-2342 / ORS 2060)).